We begin with the raw amino-acid sequence, 414 residues long: Probable serine/threonine-protein kinase PBL26 (414 aa).

A lipid anchor (S-palmitoyl cysteine) is attached at Cys-3. Residues 17-41 (RDSDNSYRRNGEVTGRDNNKTHPEN) show a composition bias toward basic and acidic residues. The segment at 17–55 (RDSDNSYRRNGEVTGRDNNKTHPENPKTVNEQNKNNDED) is disordered. The 278-residue stretch at 79 to 356 (FRQECLIGEG…SDVVTALGFL (278 aa)) folds into the Protein kinase domain. ATP contacts are provided by residues 85 to 93 (IGEGGFGRV) and Lys-108. Tyr-153 is subject to Phosphotyrosine. The active-site Proton acceptor is the Asp-206. The residue at position 240 (Ser-240) is a Phosphoserine. Residue Thr-246 is modified to Phosphothreonine. Phosphotyrosine is present on Tyr-254. The interval 364–394 (ISVPHYDDPPQPSDETSVEDSVAAEERERAV) is disordered.

The protein belongs to the protein kinase superfamily. Ser/Thr protein kinase family. Post-translationally, palmitoylation at Cys-3 and Cys-6 are required for plasma membrane location.

It is found in the cell membrane. It catalyses the reaction L-seryl-[protein] + ATP = O-phospho-L-seryl-[protein] + ADP + H(+). The enzyme catalyses L-threonyl-[protein] + ATP = O-phospho-L-threonyl-[protein] + ADP + H(+). May be involved in plant defense signaling. The chain is Probable serine/threonine-protein kinase PBL26 from Arabidopsis thaliana (Mouse-ear cress).